An 88-amino-acid chain; its full sequence is Small ribosomal subunit protein bS20 (88 aa).

It belongs to the bacterial ribosomal protein bS20 family.

Functionally, binds directly to 16S ribosomal RNA. This Heliobacterium modesticaldum (strain ATCC 51547 / Ice1) protein is Small ribosomal subunit protein bS20.